Consider the following 557-residue polypeptide: 2-isopropylmalate synthase (557 aa).

The 275-residue stretch at 33 to 307 (PIWCSSDLRD…DPQLDFSDID (275 aa)) folds into the Pyruvate carboxyltransferase domain. Residues Asp-42, His-246, His-248, and Asn-282 each coordinate Mg(2+). The interval 439–557 (ANSPYALVSH…SLSQQEAKAA (119 aa)) is regulatory domain.

The protein belongs to the alpha-IPM synthase/homocitrate synthase family. LeuA type 2 subfamily. As to quaternary structure, homodimer. Requires Mg(2+) as cofactor.

The protein localises to the cytoplasm. It carries out the reaction 3-methyl-2-oxobutanoate + acetyl-CoA + H2O = (2S)-2-isopropylmalate + CoA + H(+). Its pathway is amino-acid biosynthesis; L-leucine biosynthesis; L-leucine from 3-methyl-2-oxobutanoate: step 1/4. Functionally, catalyzes the condensation of the acetyl group of acetyl-CoA with 3-methyl-2-oxobutanoate (2-ketoisovalerate) to form 3-carboxy-3-hydroxy-4-methylpentanoate (2-isopropylmalate). This Pseudomonas putida (strain W619) protein is 2-isopropylmalate synthase.